The primary structure comprises 128 residues: 3-aminoacrylate deaminase RutC (128 aa).

Belongs to the RutC family. As to quaternary structure, homotrimer.

The catalysed reaction is (Z)-3-aminoacrylate + H2O + H(+) = 3-oxopropanoate + NH4(+). In terms of biological role, involved in pyrimidine catabolism. Catalyzes the deamination of 3-aminoacrylate to malonic semialdehyde, a reaction that can also occur spontaneously. RutC may facilitate the reaction and modulate the metabolic fitness, rather than catalyzing essential functions. The polypeptide is 3-aminoacrylate deaminase RutC (Escherichia coli O103:H2 (strain 12009 / EHEC)).